The sequence spans 115 residues: Non-specific lipid-transfer protein (115 aa).

A signal peptide spans 1–24 (MASSAVIKLALVVALCMAVSVAHA). 4 cysteine pairs are disulfide-bonded: cysteine 27/cysteine 74, cysteine 37/cysteine 51, cysteine 52/cysteine 97, and cysteine 72/cysteine 111.

This sequence belongs to the plant LTP family.

Its function is as follows. Plant non-specific lipid-transfer proteins transfer phospholipids as well as galactolipids across membranes. May play a role in wax or cutin deposition in the cell walls of expanding epidermal cells and certain secretory tissues. In Pyrus communis (Pear), this protein is Non-specific lipid-transfer protein.